The primary structure comprises 464 residues: MMARRDPTSWAKRLVRAQTLQKQRRAPVGPRAPPPDEEDPRLKCKNCGAFGHTARSTRCPMKCWKAALVPATLGKKEGKENLKPWKPRGEANPGPLNKDKGEKEERPRQQDPQRKALLHMFSGKPPEKPLPNGKGSTEPSDYLRVASGPMPVHTTSKRPRLDPVLADRSATEMSGRGSVLASLSPLRKASLSSSSSLGPKERQTGAAADMPQPAVRHQGREPLLVVKPTHSRPEGGCREVPQAASKTHGLLQAARPQAQDKRPAVTSQPCPPAATHSLGLGSNLSFGPGAKRPAQAPIQACLNFPKKPRLGPFQIPESAIQGGELGAPENLQPPPAATELGPSTSPQMGRRTPAQVPSVDRQPPHSRPCLPTAQACTMSHHPAASHDGAQPLRVLFRRLENGRWSSSLLAAPSFHSPEKPGAFLAQSPHVSEKSEAPCVRVPPSVLYEDLQVSSSSEDSDSDLE.

3 disordered regions span residues 1–42, 69–389, and 411–437; these read MMAR…DPRL, VPAT…HDGA, and APSF…SEAP. Composition is skewed to basic and acidic residues over residues 74-89 and 97-114; these read GKKE…KPRG and NKDK…DPQR. Positions 180-197 are enriched in low complexity; sequence LASLSPLRKASLSSSSSL.

Belongs to the FAM90 family.

This chain is Protein FAM90A13, found in Homo sapiens (Human).